An 861-amino-acid polypeptide reads, in one-letter code: ToMV resistance protein Tm-2(GCR236) (861 aa).

A coiled-coil region spans residues 63–83; it reads VKNLLKDIQELAGDVEDLLDD. The region spanning 162-388 is the NB-ARC domain; the sequence is DDFNMLQAKL…LESMGHKVQD (227 aa). ATP is bound at residue 185-192; that stretch reads GMPGLGKT. LRR repeat units lie at residues 225–248, 305–327, 388–411, 449–472, 510–536, 585–608, 609–631, 652–680, 689–710, 712–735, 736–758, 784–810, and 811–835; these read LDIA…NLRS, LHAL…IFNF, DGCA…CFLY, LAED…TYNG, VARL…KLEK, MTCL…IVKL, TRLE…VWES, ISSF…FFEP, LRKL…IFSP, LKAL…LSSY, PHIA…SFPP, LRKL…GYSF, and PQLE…DVSM.

This sequence belongs to the disease resistance NB-LRR family. In terms of assembly, (Microbial infection) Interacts with tobamoviruses mouvement protein at the plasma membrane; this interaction triggers defense responses leading to programmed cell death. Binds to HSP90 proteins; this interaction seems required for defense responses toward tobamoviruses.

The protein resides in the cell membrane. In terms of biological role, inhibitor of viral mouvements which confers resistance to some tobamoviruses including tomato mosaic virus (ToMV) (e.g. isolates L, W3 and SL-1) and tobacco mosaic virus (TMV), but not to resistance-breaking isolates (e.g. B7, LT1, LII, Ltbl, ToMV2, and ToMV1-2) ToMV and tomato brown rugose fruit virus (ToBRFV). Elicits a hypersensitive reaction in response to avirulent (Avr) movement proteins from resistance inducing tobamoviruses (e.g. ToMV and TMV) strains, thus leading to programmed cell death. In Solanum lycopersicum (Tomato), this protein is ToMV resistance protein Tm-2(GCR236).